The primary structure comprises 505 residues: MQQRELNYLFLKRIGINTHQEPVVYMRQDCHVCRSEGFNAHSRVRVTTNKRSIIATVHQVTDGWLSHQEAGLSDAAWRLLEAEDGEVAYFSHTKAVDSMSHVRGKLYGASLTQESADEVVKDVAGGLYSDVQLAAFVTACAGSRLNQDEVAALTSAMVKVGQRIDWGTSPIMDKHCVGGLPGNRTTPIVVAIVTACGLRMPKTSSRAITSPAGTADTMETMAPVNLTLAQMKKVVEQEGGCIAWGGSVSLSPADDVLIRIERALDLDSEGQLVASVISKKVAAGSTHVLIDIPIGMTAKVRSPEYAERLASHMRYTGVKLGIQVEAMFTDGAQPVGRGIGPALEARDILAVLRNQAEAPADLRVRALTLAGRLLEIGGVASHGAGVARARETLESGAALHKFMAICEAQGGFREPALAPHCYEATADRVGVVSFVNNRFVAKLAKLAGAPSNSSAGVDFHVKLGQKVRVGEPLFSIYAEAPGELAYALDFLRDHPNEIRIEEESL.

Belongs to the thymidine/pyrimidine-nucleoside phosphorylase family. Type 2 subfamily.

The enzyme catalyses thymidine + phosphate = 2-deoxy-alpha-D-ribose 1-phosphate + thymine. This is Putative thymidine phosphorylase from Hahella chejuensis (strain KCTC 2396).